The sequence spans 219 residues: MYQHHNWQGALLDYPVSKVVCVGSNYAKHIKEMGSAVPEEPVLFIKPETALCDLRQPLAIPSDFGSVHHEVELAVLIGATLRQATEEHVRKAIAGYGVALDLTLRDVQGKMKKAGQPWEKAKAFDNSCPLSGFIPAAEFTGDPQNTTLSLSVNGEQRQQGTTADMIHKIVPLIAYMSKFFTLKAGDVVLTGTPDGVGPLQSGDELTVTFDGHSLTTRVL.

Mg(2+) contacts are provided by glutamate 70, glutamate 72, and aspartate 101.

This sequence belongs to the FAH family. It depends on a divalent metal cation as a cofactor.

The catalysed reaction is oxaloacetate = enol-oxaloacetate. In terms of biological role, tautomerase that converts enol-oxaloacetate to the keto form of oxaloacetate. The sequence is that of Oxaloacetate tautomerase YcgM from Escherichia coli (strain K12).